Consider the following 286-residue polypeptide: Transcription factor egl-46 (286 aa).

Residues 180–200 form a C2H2-type 1; atypical zinc finger; it reads CICRLCKVKYEDVFKLAQHKC. 2 consecutive C2H2-type zinc fingers follow at residues 208–230 and 248–271; these read YKCPDCDKVFSCPANLASHRRWH and VSCSTCFNSFPTKKMLKLHSSTCQ.

The protein belongs to the INSM1 family. In terms of assembly, interacts (via C-terminus) with egl-44 (via N-terminus); the interaction is direct; the interaction may regulate transcription. As to expression, expressed in touch cells, HSN cells, ventral cord motor neurons and ciliated ray neurons.

It localises to the nucleus. In terms of biological role, transcription factor. Represses expression of genes involved in differentiation of touch receptor neurons (TRN), probably acting as a heterodimer with egl-44, perhaps by occupying similar cis-regulatory elements as an unc-86/mec-3 heterodimer. Plays a role in cell fate specification of neurons, including the hook neuron HOB, the gas-sensing neuron BAG and touch receptor neurons. Plays a role in neuron differentiation by repressing the expression of zag-1 in FLP neurons, probably acting as a heterodimer with egl-44; because zag-1 represses expression of egl-46 and egl-44, together these proteins form a bistable, negative-feedback loop that regulates the choice between neuronal fates. Acts downstream of egl-44 to prevent touch cell differentiation in FLP neurons. Involved in male mating behavior, acting in concert with egl-44, via modulation of expression of polycystins lov-1 and pkd-2, homeodomain protein ceh-26, and neuropeptide-like protein nlp-8. Modulates the expression of a subset of terminal differentiation genes involved in O(2)- and CO(2)-sensing, acting in parallel to ets-5 and egl-13. May act upstream of RFX transcription factor daf-19 to regulate gene expression specifically in the HOB neuron. Plays a role in specifying commissural dendrites of the PVD nociceptive neurons, acting in concert with egl-44. In association with egl-44, regulates cell cycle exit in the neuronal Q cell lineage. This chain is Transcription factor egl-46, found in Caenorhabditis elegans.